The chain runs to 298 residues: Glycine--tRNA ligase alpha subunit (298 aa).

The protein belongs to the class-II aminoacyl-tRNA synthetase family. Tetramer of two alpha and two beta subunits.

It localises to the cytoplasm. The enzyme catalyses tRNA(Gly) + glycine + ATP = glycyl-tRNA(Gly) + AMP + diphosphate. This is Glycine--tRNA ligase alpha subunit from Helicobacter acinonychis (strain Sheeba).